The following is a 199-amino-acid chain: Glycerol-3-phosphate acyltransferase (199 aa).

A run of 5 helical transmembrane segments spans residues 3-23 (YILI…YLLP), 50-70 (VIGF…VLVF), 77-97 (IHYT…PVFL), 110-130 (GVFF…WISI), and 136-156 (YVSL…FFFN).

The protein belongs to the PlsY family. As to quaternary structure, probably interacts with PlsX.

The protein resides in the cell inner membrane. The enzyme catalyses an acyl phosphate + sn-glycerol 3-phosphate = a 1-acyl-sn-glycero-3-phosphate + phosphate. It functions in the pathway lipid metabolism; phospholipid metabolism. In terms of biological role, catalyzes the transfer of an acyl group from acyl-phosphate (acyl-PO(4)) to glycerol-3-phosphate (G3P) to form lysophosphatidic acid (LPA). This enzyme utilizes acyl-phosphate as fatty acyl donor, but not acyl-CoA or acyl-ACP. The chain is Glycerol-3-phosphate acyltransferase from Pseudothermotoga lettingae (strain ATCC BAA-301 / DSM 14385 / NBRC 107922 / TMO) (Thermotoga lettingae).